The sequence spans 393 residues: NAD(P)H-quinone oxidoreductase subunit H, chloroplastic (393 aa).

This sequence belongs to the complex I 49 kDa subunit family. NDH is composed of at least 16 different subunits, 5 of which are encoded in the nucleus.

It is found in the plastid. Its subcellular location is the chloroplast thylakoid membrane. It catalyses the reaction a plastoquinone + NADH + (n+1) H(+)(in) = a plastoquinol + NAD(+) + n H(+)(out). It carries out the reaction a plastoquinone + NADPH + (n+1) H(+)(in) = a plastoquinol + NADP(+) + n H(+)(out). Its function is as follows. NDH shuttles electrons from NAD(P)H:plastoquinone, via FMN and iron-sulfur (Fe-S) centers, to quinones in the photosynthetic chain and possibly in a chloroplast respiratory chain. The immediate electron acceptor for the enzyme in this species is believed to be plastoquinone. Couples the redox reaction to proton translocation, and thus conserves the redox energy in a proton gradient. The protein is NAD(P)H-quinone oxidoreductase subunit H, chloroplastic of Populus alba (White poplar).